Reading from the N-terminus, the 141-residue chain is Nucleoside diphosphate kinase (141 aa).

ATP-binding residues include Lys11, Phe59, Arg87, Thr93, Arg104, and Asn114. Catalysis depends on His117, which acts as the Pros-phosphohistidine intermediate.

This sequence belongs to the NDK family. In terms of assembly, homotetramer. Mg(2+) is required as a cofactor.

It is found in the cytoplasm. The catalysed reaction is a 2'-deoxyribonucleoside 5'-diphosphate + ATP = a 2'-deoxyribonucleoside 5'-triphosphate + ADP. It carries out the reaction a ribonucleoside 5'-diphosphate + ATP = a ribonucleoside 5'-triphosphate + ADP. Functionally, major role in the synthesis of nucleoside triphosphates other than ATP. The ATP gamma phosphate is transferred to the NDP beta phosphate via a ping-pong mechanism, using a phosphorylated active-site intermediate. The protein is Nucleoside diphosphate kinase of Pseudomonas fluorescens (strain Pf0-1).